A 298-amino-acid chain; its full sequence is Oxidoreductase YdhF (298 aa).

Y55 functions as the Proton donor in the catalytic mechanism. NADP(+) is bound by residues 158-159 (SN), 209-220 (WSCLGGGRLFND), and 263-264 (SG).

Belongs to the aldo/keto reductase family. Aldo/keto reductase 2 subfamily.

May function as oxidoreductase. The protein is Oxidoreductase YdhF (ydhF) of Escherichia coli (strain K12).